A 101-amino-acid polypeptide reads, in one-letter code: Large ribosomal subunit protein uL23 (101 aa).

It belongs to the universal ribosomal protein uL23 family. In terms of assembly, part of the 50S ribosomal subunit. Contacts protein L29, and trigger factor when it is bound to the ribosome.

Its function is as follows. One of the early assembly proteins it binds 23S rRNA. One of the proteins that surrounds the polypeptide exit tunnel on the outside of the ribosome. Forms the main docking site for trigger factor binding to the ribosome. The chain is Large ribosomal subunit protein uL23 from Kocuria rhizophila (strain ATCC 9341 / DSM 348 / NBRC 103217 / DC2201).